The following is a 286-amino-acid chain: NAD kinase (286 aa).

Asp-74 functions as the Proton acceptor in the catalytic mechanism. NAD(+) contacts are provided by residues Asp-74–Gly-75, Asn-148–Asp-149, Asp-178, Ala-186, Thr-189–Ser-194, and Gln-244.

This sequence belongs to the NAD kinase family. The cofactor is a divalent metal cation.

The protein localises to the cytoplasm. It carries out the reaction NAD(+) + ATP = ADP + NADP(+) + H(+). Involved in the regulation of the intracellular balance of NAD and NADP, and is a key enzyme in the biosynthesis of NADP. Catalyzes specifically the phosphorylation on 2'-hydroxyl of the adenosine moiety of NAD to yield NADP. The sequence is that of NAD kinase from Campylobacter jejuni subsp. doylei (strain ATCC BAA-1458 / RM4099 / 269.97).